A 309-amino-acid chain; its full sequence is E3 ubiquitin-protein ligase SINAT5 (309 aa).

The segment at 46 to 82 (CPVCTNSMYPPIHQCHNGHTLCSTCKSRVHNRCPTCR) adopts an RING-type zinc-finger fold. The segment at 96-289 (VAESLELPCK…KELKLRVTGR (194 aa)) is SBD. The segment at 99–159 (SLELPCKYYN…LVAHLRDDHK (61 aa)) adopts an SIAH-type zinc-finger fold. Zn(2+) contacts are provided by Cys-104, Cys-111, His-123, Cys-127, Cys-134, Cys-141, His-153, and His-158.

It belongs to the SINA (Seven in absentia) family. Homodimer; homodimerization is essential for its function. Interacts with UBC28 and NAC021/NAC022. Interacts with SINAT6. Interacts with ATG6 and TRAF1A. Interacts with WAV3. Interacts with FREE1. As to expression, expressed at low level in the vascular tissue of mature roots. Expressed in lateral roots and in elongation zone of the main root upon stimulation by auxin. Colocalizes with NAC021/NAC022.

It is found in the nucleus. It localises to the cytoplasm. It catalyses the reaction S-ubiquitinyl-[E2 ubiquitin-conjugating enzyme]-L-cysteine + [acceptor protein]-L-lysine = [E2 ubiquitin-conjugating enzyme]-L-cysteine + N(6)-ubiquitinyl-[acceptor protein]-L-lysine.. Its pathway is protein modification; protein ubiquitination. Its function is as follows. E3 ubiquitin-protein ligase that mediates ubiquitination and subsequent proteasomal degradation of target proteins. E3 ubiquitin ligases accept ubiquitin from an E2 ubiquitin-conjugating enzyme in the form of a thioester and then directly transfers the ubiquitin to targeted substrates. Mediates the ubiquitination and proteasomal-dependent degradation of NAC021/NAC022, a transcription activator that functions downstream of the auxin signals, thereby acting as a down-regulator of auxin signals. Involved in the formation of lateral roots. Is antagonist to SINAT1, SINAT2, SINAT3 and SINAT4 by suppressing FREE1 ubiquitination and degradation mediated by SINAT1, SINAT2, SINAT3 and SINAT4, and promoting FREE1 accumulation. This Arabidopsis thaliana (Mouse-ear cress) protein is E3 ubiquitin-protein ligase SINAT5.